We begin with the raw amino-acid sequence, 117 residues long: Mitochondrial import inner membrane translocase subunit Tim10B (117 aa).

Residues 22 to 46 (CFSRCVDNLSQRDLGGHEDLCVDRC) carry the Twin CX3C motif motif. Intrachain disulfides connect Cys-22–Cys-46 and Cys-26–Cys-42. The segment covering 75–97 (EMEENARKAEQQQREQEKERLKE) has biased composition (basic and acidic residues). The segment at 75-117 (EMEENARKAEQQQREQEKERLKEAAATAVLTPVQPPVAGNLSM) is disordered.

The protein belongs to the small Tim family. Component of the TIM22 complex, whose core is composed of Tim22, associated with peripheral protein Tim9b/Tim10b and the 70 kDa heterohexamer. In most cases, the 70 kDa complex is composed of TIMM9 and TIMM10.

The protein localises to the mitochondrion inner membrane. Component of the TIM22 complex, a complex that mediates the import and insertion of multi-pass transmembrane proteins into the mitochondrial inner membrane. The TIM22 complex forms a twin-pore translocase that uses the membrane potential as the external driving force. In the TIM22 complex, it may act as a docking point for the soluble 70 kDa complex that guides the target proteins in transit through the aqueous mitochondrial intermembrane space. The protein is Mitochondrial import inner membrane translocase subunit Tim10B (Tim9b) of Drosophila melanogaster (Fruit fly).